The sequence spans 236 residues: Biosynthetic peptidoglycan transglycosylase (236 aa).

Residues 12–31 form a helical membrane-spanning segment; the sequence is ALLWFAAGSVLVVLVLRWVP.

This sequence belongs to the glycosyltransferase 51 family.

Its subcellular location is the cell inner membrane. It catalyses the reaction [GlcNAc-(1-&gt;4)-Mur2Ac(oyl-L-Ala-gamma-D-Glu-L-Lys-D-Ala-D-Ala)](n)-di-trans,octa-cis-undecaprenyl diphosphate + beta-D-GlcNAc-(1-&gt;4)-Mur2Ac(oyl-L-Ala-gamma-D-Glu-L-Lys-D-Ala-D-Ala)-di-trans,octa-cis-undecaprenyl diphosphate = [GlcNAc-(1-&gt;4)-Mur2Ac(oyl-L-Ala-gamma-D-Glu-L-Lys-D-Ala-D-Ala)](n+1)-di-trans,octa-cis-undecaprenyl diphosphate + di-trans,octa-cis-undecaprenyl diphosphate + H(+). The protein operates within cell wall biogenesis; peptidoglycan biosynthesis. Peptidoglycan polymerase that catalyzes glycan chain elongation from lipid-linked precursors. This chain is Biosynthetic peptidoglycan transglycosylase, found in Pseudomonas syringae pv. syringae (strain B728a).